The chain runs to 215 residues: Cytochrome b6 (215 aa).

A helical membrane pass occupies residues 32–52 (IFYCLGGITLTCFLIQFATGF). Cysteine 35 is a binding site for heme c. Heme b-binding residues include histidine 86 and histidine 100. The next 3 helical transmembrane spans lie at 90-110 (ASMM…TGGF), 116-136 (LTWV…VTGY), and 186-206 (AHTF…FLMI). Heme b contacts are provided by histidine 187 and histidine 202.

Belongs to the cytochrome b family. PetB subfamily. As to quaternary structure, the 4 large subunits of the cytochrome b6-f complex are cytochrome b6, subunit IV (17 kDa polypeptide, PetD), cytochrome f and the Rieske protein, while the 4 small subunits are PetG, PetL, PetM and PetN. The complex functions as a dimer. The cofactor is heme b. Heme c serves as cofactor.

The protein localises to the cellular thylakoid membrane. Its function is as follows. Component of the cytochrome b6-f complex, which mediates electron transfer between photosystem II (PSII) and photosystem I (PSI), cyclic electron flow around PSI, and state transitions. This Desmonostoc sp. (strain PCC 7906) (Nostoc sp. (strain PCC 7906)) protein is Cytochrome b6.